We begin with the raw amino-acid sequence, 130 residues long: Small ribosomal subunit protein uS9 (130 aa).

This sequence belongs to the universal ribosomal protein uS9 family.

The chain is Small ribosomal subunit protein uS9 from Stenotrophomonas maltophilia (strain R551-3).